The primary structure comprises 358 residues: Hydroxyproline O-arabinosyltransferase 2 (358 aa).

The helical; Signal-anchor transmembrane segment at 7-26 threads the bilayer; that stretch reads YFFPILMTLSLFLIIRYNYI.

Ubiquitous.

Its subcellular location is the golgi apparatus. The protein resides in the cis-Golgi network membrane. It catalyses the reaction trans-4-hydroxy-L-prolyl-[protein] + UDP-beta-L-arabinofuranose = O-(beta-L-arabinofuranosyl)-trans-4-hydroxy-L-prolyl-[protein] + UDP + H(+). Glycosyltransferase involved in the O-arabinosylation of several proteins including extensins and small signaling peptides. Catalyzes the transfer of the initial L-arabinose to the hydroxyl group of Hyp residues. Contributes redundantly with HPAT1 and HPAT3 to arabinosylation of EXT3. This Arabidopsis thaliana (Mouse-ear cress) protein is Hydroxyproline O-arabinosyltransferase 2.